A 164-amino-acid chain; its full sequence is Phosphopantetheine adenylyltransferase (164 aa).

Position 9 (serine 9) interacts with substrate. Residues 9–10 and histidine 17 contribute to the ATP site; that span reads SF. Residues lysine 41, leucine 73, and lysine 87 each coordinate substrate. ATP is bound by residues 88-90, glutamate 98, and 123-129; these read GLR and YSYISSS.

Belongs to the bacterial CoaD family. As to quaternary structure, homohexamer. It depends on Mg(2+) as a cofactor.

It is found in the cytoplasm. It carries out the reaction (R)-4'-phosphopantetheine + ATP + H(+) = 3'-dephospho-CoA + diphosphate. It participates in cofactor biosynthesis; coenzyme A biosynthesis; CoA from (R)-pantothenate: step 4/5. Its function is as follows. Reversibly transfers an adenylyl group from ATP to 4'-phosphopantetheine, yielding dephospho-CoA (dPCoA) and pyrophosphate. The polypeptide is Phosphopantetheine adenylyltransferase (Clostridium perfringens (strain 13 / Type A)).